The primary structure comprises 217 residues: Ribonuclease HII (217 aa).

Residues 27-216 enclose the RNase H type-2 domain; sequence SQVAGVDEAG…VKESIQEGVC (190 aa). Residues Asp33, Glu34, and Asp126 each contribute to the a divalent metal cation site.

This sequence belongs to the RNase HII family. Mn(2+) serves as cofactor. Requires Mg(2+) as cofactor.

The protein resides in the cytoplasm. It catalyses the reaction Endonucleolytic cleavage to 5'-phosphomonoester.. In terms of biological role, endonuclease that specifically degrades the RNA of RNA-DNA hybrids. The polypeptide is Ribonuclease HII (Chlamydia trachomatis serovar L2 (strain ATCC VR-902B / DSM 19102 / 434/Bu)).